A 31-amino-acid chain; its full sequence is Elongation factor Tu (31 aa).

Belongs to the GTP-binding elongation factor family. EF-Tu/EF-1A subfamily. As to quaternary structure, monomer.

It localises to the cytoplasm. Functionally, this protein promotes the GTP-dependent binding of aminoacyl-tRNA to the A-site of ribosomes during protein biosynthesis. The chain is Elongation factor Tu (tuf) from Streptomyces laurentii.